The primary structure comprises 674 residues: Alpha-L-arabinofuranosidase 2 (674 aa).

The signal sequence occupies residues 1 to 24; sequence MDMETSWRFLRSVCLLSFILGSFS. Asn48, Asn180, Asn199, Asn210, Asn361, Asn522, and Asn548 each carry an N-linked (GlcNAc...) asparagine glycan.

The protein belongs to the glycosyl hydrolase 51 family. In terms of tissue distribution, high expression in flowers, siliques and stems. Observed in the vasculature of older root tissue, at the tip of anthers and in the petal blade of fully developed flowers, in floral abscission zones and in silique replum tissue. Expressed in the cambium and phloem, but not in the xylem or in the vascular system of floral tissues.

It localises to the secreted. The protein resides in the extracellular space. It is found in the extracellular matrix. The catalysed reaction is Hydrolysis of terminal non-reducing alpha-L-arabinofuranoside residues in alpha-L-arabinosides.. Its function is as follows. May be involved in the coordinated dissolution of the cell wall matrix during abscission and in the secondary cell wall formation in xylem vessels. The sequence is that of Alpha-L-arabinofuranosidase 2 (ASD2) from Arabidopsis thaliana (Mouse-ear cress).